The primary structure comprises 325 residues: Protein SAR DEFICIENT 4 (325 aa).

The N-terminal 42 residues, 1–42 (MAALPVFIPAESFPSILSHETLINHFRTNLPKHSSTITSPVR), are a transit peptide targeting the chloroplast.

Belongs to the ornithine cyclodeaminase/mu-crystallin family.

The protein localises to the plastid. Its subcellular location is the chloroplast. Functionally, involved in the biosynthesis of pipecolate (Pip), a metabolite that orchestrates defense amplification, positive regulation of salicylic acid (SA) biosynthesis, and priming to guarantee effective local resistance induction and the establishment of systemic acquired resistance (SAR). Converts delta-(1)-piperideine-2-carboxylate (P2C) to Pip. Mediates reduction of P2C and biosynthesis of Pip in systemic tissue and contributes to SAR establishment. Does not possess ornithine cyclodeaminase activity in vitro. The chain is Protein SAR DEFICIENT 4 from Arabidopsis thaliana (Mouse-ear cress).